We begin with the raw amino-acid sequence, 263 residues long: MITVNTLQKMKAAGEKIAMLTAYESSFAALMDDAGVDVLLVGDSLGMAVQGRQSTLPVSLRDMCYHTECVARGAKNAMIVSDLPFGAYQQSKEQAFAAAAELMAAGAHMVKLEGGVWMAETTEFLQMRGIPVCAHIGLTPQSVFAFGGYKVQGRGGKAQALLNDAKAHDDAGAAVVLMECVPAELAKKVTESVSCPTIGIGAGVDCDGQVLVMHDMLGIFPGKTAKFVKNFMQGQSSIQAAVRAYVAEVKAKTFPAAEHIFAD.

2 residues coordinate Mg(2+): Asp43 and Asp82. Residues 43 to 44, Asp82, and Lys111 each bind 3-methyl-2-oxobutanoate; that span reads DS. Mg(2+) is bound at residue Glu113. Glu179 acts as the Proton acceptor in catalysis.

It belongs to the PanB family. Homodecamer; pentamer of dimers. Mg(2+) is required as a cofactor.

The protein localises to the cytoplasm. It catalyses the reaction 3-methyl-2-oxobutanoate + (6R)-5,10-methylene-5,6,7,8-tetrahydrofolate + H2O = 2-dehydropantoate + (6S)-5,6,7,8-tetrahydrofolate. The protein operates within cofactor biosynthesis; (R)-pantothenate biosynthesis; (R)-pantoate from 3-methyl-2-oxobutanoate: step 1/2. Its function is as follows. Catalyzes the reversible reaction in which hydroxymethyl group from 5,10-methylenetetrahydrofolate is transferred onto alpha-ketoisovalerate to form ketopantoate. This Neisseria meningitidis serogroup A / serotype 4A (strain DSM 15465 / Z2491) protein is 3-methyl-2-oxobutanoate hydroxymethyltransferase.